The primary structure comprises 199 residues: Small ribosomal subunit protein uS4 (199 aa).

One can recognise an S4 RNA-binding domain in the interval 106-170 (RRLQTIVFRK…SPVANELHPI (65 aa)). Positions 177-199 (PAQRSAEMKEGQGEASEEGETDE) are disordered.

This sequence belongs to the universal ribosomal protein uS4 family. Part of the 30S ribosomal subunit. Contacts protein S5. The interaction surface between S4 and S5 is involved in control of translational fidelity.

One of the primary rRNA binding proteins, it binds directly to 16S rRNA where it nucleates assembly of the body of the 30S subunit. Its function is as follows. With S5 and S12 plays an important role in translational accuracy. This is Small ribosomal subunit protein uS4 from Thermoplasma acidophilum (strain ATCC 25905 / DSM 1728 / JCM 9062 / NBRC 15155 / AMRC-C165).